We begin with the raw amino-acid sequence, 164 residues long: Urocortin-3 (164 aa).

The signal sequence occupies residues 1-23 (MLMPTYFLLPLLLLLGGPRTSLS). Positions 24 to 121 (HKFYNTGPVF…PDKPKSDRGT (98 aa)) are excised as a propeptide. The disordered stretch occupies residues 58–120 (SFGHLPTQDP…YPDKPKSDRG (63 aa)). Basic and acidic residues predominate over residues 110–120 (LYPDKPKSDRG). Residue Ile-160 is modified to Isoleucine amide.

It belongs to the sauvagine/corticotropin-releasing factor/urotensin I family. As to quaternary structure, binds with high affinity to CRF receptors 2-alpha and 2-beta. Expressed in some areas of the brain including the hypothalamus, amygdala, and brainstem, but is not evident in the cerebellum, pituitary, or cerebral cortex; it is also expressed peripherally in small intestine and skin.

The protein localises to the secreted. Its function is as follows. Suppresses food intake, delays gastric emptying and decreases heat-induced edema. Might represent an endogenous ligand for maintaining homeostasis after stress. This chain is Urocortin-3 (Ucn3), found in Mus musculus (Mouse).